The chain runs to 449 residues: Sensor protein QseC (449 aa).

Topologically, residues methionine 1–arginine 12 are cytoplasmic. A helical membrane pass occupies residues leucine 13–tryptophan 33. Over arginine 34–alanine 161 the chain is Periplasmic. A helical transmembrane segment spans residues alanine 162–leucine 182. In terms of domain architecture, HAMP spans histidine 183 to valine 235. Residues histidine 183 to tryptophan 449 are Cytoplasmic-facing. In terms of domain architecture, Histidine kinase spans aspartate 243–tryptophan 449. Phosphohistidine; by autocatalysis is present on histidine 246.

The protein resides in the cell inner membrane. The catalysed reaction is ATP + protein L-histidine = ADP + protein N-phospho-L-histidine.. Member of a two-component regulatory system QseB/QseC. Activates the flagella regulon by activating transcription of FlhDC. May activate QseB by phosphorylation. This chain is Sensor protein QseC (qseC), found in Salmonella typhi.